Consider the following 362-residue polypeptide: UPF0324 membrane protein YPO1307/y2878/YP_1285 (362 aa).

9 consecutive transmembrane segments (helical) span residues 21-38 (YIPG…ALNV), 48-70 (GLGA…YPWL), 102-124 (VADV…FILA), 139-161 (VMLI…EPVL), 168-190 (VAVA…PWLY), 240-257 (MIRV…SAYL), 278-300 (WFAV…AVWV), 305-327 (TLDT…IGSI), and 334-356 (PLLL…NLFV).

This sequence belongs to the UPF0324 family.

It is found in the cell membrane. The polypeptide is UPF0324 membrane protein YPO1307/y2878/YP_1285 (Yersinia pestis).